A 132-amino-acid polypeptide reads, in one-letter code: Translation initiation factor 5A (132 aa).

Residue K36 is modified to Hypusine.

This sequence belongs to the eIF-5A family.

The protein resides in the cytoplasm. Its function is as follows. Functions by promoting the formation of the first peptide bond. The chain is Translation initiation factor 5A (eIF5A) from Pyrobaculum islandicum (strain DSM 4184 / JCM 9189 / GEO3).